The primary structure comprises 179 residues: ATP-dependent protease subunit HslV (179 aa).

Residue threonine 8 is part of the active site. Residues serine 164, cysteine 167, and threonine 170 each coordinate Na(+).

This sequence belongs to the peptidase T1B family. HslV subfamily. A double ring-shaped homohexamer of HslV is capped on each side by a ring-shaped HslU homohexamer. The assembly of the HslU/HslV complex is dependent on binding of ATP.

It localises to the cytoplasm. The catalysed reaction is ATP-dependent cleavage of peptide bonds with broad specificity.. Allosterically activated by HslU binding. Its function is as follows. Protease subunit of a proteasome-like degradation complex believed to be a general protein degrading machinery. This chain is ATP-dependent protease subunit HslV, found in Staphylococcus carnosus (strain TM300).